The primary structure comprises 506 residues: Tabersonine 3-oxygenase (506 aa).

Topologically, residues 1–5 are lumenal; sequence MEFHE. Residues 6-26 traverse the membrane as a helical segment; it reads SSPFVFITRGFIFIAISIAVL. The Cytoplasmic segment spans residues 27–506; it reads RRIISKKTKT…DLQLIATSYA (480 aa). Cys450 contributes to the heme binding site.

This sequence belongs to the cytochrome P450 family. Heme is required as a cofactor. As to expression, expressed in leaf epidermis.

The protein resides in the endoplasmic reticulum membrane. The catalysed reaction is 16-methoxytabersonine + reduced [NADPH--hemoprotein reductase] + O2 = (3R)-1,2-didehydro-3-hydroxy-16-methoxy-2,3-dihydrotabersonine + oxidized [NADPH--hemoprotein reductase] + H2O + H(+). It carries out the reaction (-)-tabersonine + reduced [NADPH--hemoprotein reductase] + O2 = (3R)-1,2-didehydro-3-hydroxy-2,3-dihydrotabersonine + oxidized [NADPH--hemoprotein reductase] + H2O + H(+). The protein operates within alkaloid biosynthesis; vindoline biosynthesis. Cytochrome P450 catalyzing the monooxygenation of 16-methoxytabersonine, 16-hydroxytabersonine and tabersonine, but not of 2,3-dihydrotabersonine. Converts the C2,C3 alkene of tabersonine and 16-methoxytabersonine to the epoxides, which then spontaneously open to form the corresponding imine alcohols. Inactive in converting amyrin to ursolic acid. The sequence is that of Tabersonine 3-oxygenase from Catharanthus roseus (Madagascar periwinkle).